We begin with the raw amino-acid sequence, 119 residues long: UPF0342 protein Athe_0692 (119 aa).

This sequence belongs to the UPF0342 family.

This chain is UPF0342 protein Athe_0692, found in Caldicellulosiruptor bescii (strain ATCC BAA-1888 / DSM 6725 / KCTC 15123 / Z-1320) (Anaerocellum thermophilum).